Reading from the N-terminus, the 91-residue chain is UPF0367 protein cce_2199 (91 aa).

Belongs to the UPF0367 family.

This Crocosphaera subtropica (strain ATCC 51142 / BH68) (Cyanothece sp. (strain ATCC 51142)) protein is UPF0367 protein cce_2199.